The primary structure comprises 157 residues: Alpha-amylase/trypsin inhibitor RA16 (157 aa).

Positions M1–A26 are cleaved as a signal peptide. 5 cysteine pairs are disulfide-bonded: C41–C89, C55–C77, C63–C121, C78–C137, and C91–C149.

Belongs to the cereal trypsin/alpha-amylase inhibitor family. Post-translationally, five disulfide bonds are present.

The protein resides in the secreted. Its function is as follows. Seed storage protein. This chain is Alpha-amylase/trypsin inhibitor RA16, found in Oryza sativa subsp. japonica (Rice).